We begin with the raw amino-acid sequence, 352 residues long: uncharacterized protein (352 aa).

The protein to Synechocystis PCC 6803 slr0039.

This is an uncharacterized protein from Archaeoglobus fulgidus (strain ATCC 49558 / DSM 4304 / JCM 9628 / NBRC 100126 / VC-16).